A 493-amino-acid polypeptide reads, in one-letter code: Dipeptide permease D (493 aa).

Helical transmembrane passes span Val-14 to Leu-34, Glu-49 to Ala-69, Leu-91 to Val-111, Gly-138 to Cys-158, Trp-167 to Cys-187, Asn-212 to Trp-232, Trp-235 to Tyr-255, Leu-267 to Gly-287, Met-312 to Val-332, Ile-344 to Leu-364, Leu-379 to Met-399, Val-413 to Ile-433, and Val-458 to Leu-478.

Belongs to the major facilitator superfamily. Proton-dependent oligopeptide transporter (POT/PTR) (TC 2.A.17) family. DtpD subfamily.

The protein resides in the cell inner membrane. Its function is as follows. Probable proton-dependent permease that transports dipeptides. This chain is Dipeptide permease D, found in Salmonella choleraesuis (strain SC-B67).